The chain runs to 120 residues: MGCVRNKIVKRAARTIAEKYFQRLDSTFDHNLLVVQDVAVVQSKKLKNEIAGYLTSLYKKILKGTYNKVYIKSHEEERERKENVIPKESMLDVDCVEVDDVTMEMIKRYGYEGNFKVYGM.

Belongs to the eukaryotic ribosomal protein eS17 family. As to quaternary structure, component of the small ribosomal subunit.

It localises to the cytoplasm. In Encephalitozoon cuniculi (strain GB-M1) (Microsporidian parasite), this protein is Small ribosomal subunit protein eS17 (RPS17).